Reading from the N-terminus, the 204-residue chain is NADH-quinone oxidoreductase subunit C (204 aa).

Belongs to the complex I 30 kDa subunit family. NDH-1 is composed of 14 different subunits. Subunits NuoB, C, D, E, F, and G constitute the peripheral sector of the complex.

The protein localises to the cell inner membrane. It catalyses the reaction a quinone + NADH + 5 H(+)(in) = a quinol + NAD(+) + 4 H(+)(out). NDH-1 shuttles electrons from NADH, via FMN and iron-sulfur (Fe-S) centers, to quinones in the respiratory chain. The immediate electron acceptor for the enzyme in this species is believed to be ubiquinone. Couples the redox reaction to proton translocation (for every two electrons transferred, four hydrogen ions are translocated across the cytoplasmic membrane), and thus conserves the redox energy in a proton gradient. The chain is NADH-quinone oxidoreductase subunit C from Polaromonas naphthalenivorans (strain CJ2).